A 242-amino-acid chain; its full sequence is Cysteine-rich venom protein VAR11 (242 aa).

Positions 1–19 (MILLKLYLTLAAILCQSRG) are cleaved as a signal peptide. The region spanning 41 to 169 (NKHNDLRRTV…SLKYFQVCQY (129 aa)) is the SCP domain. 8 disulfides stabilise this stretch: Cys-77/Cys-156, Cys-95/Cys-170, Cys-151/Cys-167, Cys-189/Cys-196, Cys-192/Cys-201, Cys-205/Cys-237, Cys-214/Cys-231, and Cys-223/Cys-235. A ShKT domain is found at 205-237 (CAYNDDYTSCPDLTKQVGCNHPVTANCKASCQC).

The protein belongs to the CRISP family. As to expression, expressed by the venom gland.

Its subcellular location is the secreted. Its function is as follows. Blocks ryanodine receptors, and potassium channels. The sequence is that of Cysteine-rich venom protein VAR11 from Varanus varius (Lace monitor lizard).